A 514-amino-acid polypeptide reads, in one-letter code: Protein spinster homolog 3 (514 aa).

Residues Met-1–Gly-22 form a disordered region. The segment covering Gln-9 to Gly-21 has biased composition (low complexity). Transmembrane regions (helical) follow at residues Val-54–Leu-74, Gly-88–Leu-108, Ala-116–Ser-136, Phe-149–Phe-169, Cys-176–Gly-196, Leu-212–Pro-232, Phe-264–Trp-284, Leu-313–Ala-333, Leu-347–Ala-367, Val-376–Leu-396, Val-415–Leu-435, and Ser-453–Leu-473. Positions Ala-482–Glu-514 are disordered. Residues Ser-497–Glu-514 are compositionally biased toward polar residues.

It belongs to the major facilitator superfamily. Spinster (TC 2.A.1.49) family.

It is found in the membrane. Functionally, sphingolipid transporter. This is Protein spinster homolog 3 (Spns3) from Mus musculus (Mouse).